Consider the following 3948-residue polypeptide: Hybrid PKS-NRPS synthetase fsa1 (3948 aa).

The Ketosynthase family 3 (KS3) domain occupies 4–438 (SEPIAVIGSA…GTNAHAIIEA (435 aa)). Catalysis depends on for beta-ketoacyl synthase activity residues cysteine 177, histidine 316, and histidine 358. Positions 543-846 (IFTGQGTQWP…LDTIEAISEG (304 aa)) are malonyl-CoA:ACP transacylase (MAT) domain. Residues 931–1066 (HPLLGRRCHD…AQIKASLGTP (136 aa)) form an N-terminal hotdog fold region. Residues 931–1233 (HPLLGRRCHD…MELVPFSPAT (303 aa)) are dehydratase (DH) domain. Residues 931–1235 (HPLLGRRCHD…LVPFSPATPA (305 aa)) form the PKS/mFAS DH domain. Histidine 964 acts as the Proton acceptor; for dehydratase activity in catalysis. Residues 1081–1235 (LRPVSVDRFY…LVPFSPATPA (155 aa)) are C-terminal hotdog fold. Aspartate 1141 serves as the catalytic Proton donor; for dehydratase activity. Residues 1381–1578 (YEQGFGLNLV…TTPPVHKILP (198 aa)) form a methyltransferase (MT) domain region. A ketoreductase (KR) domain region spans residues 2105–2277 (TFLLIGLTGE…VAASSIDISS (173 aa)). Residues 2389-2464 (AIIKESFIVR…DLVDESLDLL (76 aa)) form the Carrier 1 domain. Serine 2424 bears the O-(pantetheine 4'-phosphoryl)serine mark. Residues 2475 to 2555 (EAGNAHPAKP…TDNLTPPRTF (81 aa)) are disordered. Composition is skewed to polar residues over residues 2487–2505 (VIPQTPTRVTPPESSQGTS) and 2513–2528 (GSDSSRSPIDTPLTSW). The segment covering 2529 to 2541 (DRQDLSPPDKSDD) has biased composition (basic and acidic residues). Over residues 2542–2551 (APNSTDNLTP) the composition is skewed to polar residues. Residues 2547–2976 (DNLTPPRTFP…TQVLLRSYLS (430 aa)) form a condensation (C) domain region. Residues 3000 to 3402 (LKVAVDAGKA…PDTFFGTSGT (403 aa)) are adenylation (A) (KR) domain. The Carrier 2 domain maps to 3540 to 3617 (KSLTASEKRL…AMASVLEDCG (78 aa)). At serine 3577 the chain carries O-(pantetheine 4'-phosphoryl)serine. Positions 3653–3870 (LTGSSGYLGR…MPVNEIVEAI (218 aa)) are reductase (RED) domain.

In the C-terminal section; belongs to the NRP synthetase family.

It carries out the reaction L-serine + 7 malonyl-CoA + acetyl-CoA + 2 S-adenosyl-L-methionine + ATP + 8 NADPH + 11 H(+) = (5S)-3-[(2E,6R,8E,10E,12E)-2,6-dimethyltetradeca-2,8,10,12-tetraenoyl]-5-(hydroxymethyl)pyrrolidine-2,4-dione + AMP + 2 S-adenosyl-L-homocysteine + 7 CO2 + diphosphate + 8 NADP(+) + 8 CoA + 6 H2O. Its pathway is mycotoxin biosynthesis. Hybrid PKS-NRPS synthetase; part of the gene cluster that mediates the biosynthesis of HIV-1 integrase inhibitor equisetin and of fusarisetin A, both trans-fused decalin-containing tetramic acids showing also antimicrobial activity. The PKS module of fsa1 together with the enoylreductase fsa3 catalyze the formation of the polyketide unit which is then conjugated to L-serine by the condensation domain of the fsa1 NRPS module. Activity of the Dieckmann cyclase domain (RED) results in release of the Dieckmann product intermediate. Diels-Alderase fsa2 is involved in endo-selective Diels-Alder cycloaddition to form the decalin ring, leading to the production of N-desmethylequisetin also called trichosetin. Subsequent N-methylation is carried out by fsa4 to give equisetin. The enzymatic gene responsible for the conversion of equisetin to fusarisetin A has not been identified yet and is probably located outside of the fsa cluster. The chain is Hybrid PKS-NRPS synthetase fsa1 from Fusarium sp. (strain FN080326).